The chain runs to 490 residues: GTPase Der (490 aa).

EngA-type G domains follow at residues Pro-3–Val-166 and Ile-203–Thr-376. GTP contacts are provided by residues Gly-9–Ser-16, Asp-56–Ile-60, Asn-118–Asp-121, Gly-209–Ser-216, Asp-256–Val-260, and Asn-321–Asp-324. The region spanning Arg-377–Glu-461 is the KH-like domain.

The protein belongs to the TRAFAC class TrmE-Era-EngA-EngB-Septin-like GTPase superfamily. EngA (Der) GTPase family. Associates with the 50S ribosomal subunit.

Functionally, GTPase that plays an essential role in the late steps of ribosome biogenesis. The sequence is that of GTPase Der from Salmonella gallinarum (strain 287/91 / NCTC 13346).